Consider the following 1188-residue polypeptide: DNA-directed RNA polymerase subunit beta (1188 aa).

Belongs to the RNA polymerase beta chain family. As to quaternary structure, the RNAP catalytic core consists of 2 alpha, 1 beta, 1 beta' and 1 omega subunit. When a sigma factor is associated with the core the holoenzyme is formed, which can initiate transcription.

The catalysed reaction is RNA(n) + a ribonucleoside 5'-triphosphate = RNA(n+1) + diphosphate. Its function is as follows. DNA-dependent RNA polymerase catalyzes the transcription of DNA into RNA using the four ribonucleoside triphosphates as substrates. This Streptococcus gordonii (strain Challis / ATCC 35105 / BCRC 15272 / CH1 / DL1 / V288) protein is DNA-directed RNA polymerase subunit beta.